We begin with the raw amino-acid sequence, 111 residues long: Small ribosomal subunit protein bS16 (111 aa).

This sequence belongs to the bacterial ribosomal protein bS16 family.

The sequence is that of Small ribosomal subunit protein bS16 from Rickettsia felis (strain ATCC VR-1525 / URRWXCal2) (Rickettsia azadi).